Reading from the N-terminus, the 578-residue chain is Proline--tRNA ligase (578 aa).

This sequence belongs to the class-II aminoacyl-tRNA synthetase family. ProS type 1 subfamily. As to quaternary structure, homodimer.

It localises to the cytoplasm. The enzyme catalyses tRNA(Pro) + L-proline + ATP = L-prolyl-tRNA(Pro) + AMP + diphosphate. Functionally, catalyzes the attachment of proline to tRNA(Pro) in a two-step reaction: proline is first activated by ATP to form Pro-AMP and then transferred to the acceptor end of tRNA(Pro). As ProRS can inadvertently accommodate and process non-cognate amino acids such as alanine and cysteine, to avoid such errors it has two additional distinct editing activities against alanine. One activity is designated as 'pretransfer' editing and involves the tRNA(Pro)-independent hydrolysis of activated Ala-AMP. The other activity is designated 'posttransfer' editing and involves deacylation of mischarged Ala-tRNA(Pro). The misacylated Cys-tRNA(Pro) is not edited by ProRS. The sequence is that of Proline--tRNA ligase from Burkholderia cenocepacia (strain HI2424).